Consider the following 163-residue polypeptide: Transcription elongation factor GreA (163 aa).

A coiled-coil region spans residues 12–73 (YEKIQKEFEA…ELSDLLARAQ (62 aa)).

Belongs to the GreA/GreB family.

Its function is as follows. Necessary for efficient RNA polymerase transcription elongation past template-encoded arresting sites. The arresting sites in DNA have the property of trapping a certain fraction of elongating RNA polymerases that pass through, resulting in locked ternary complexes. Cleavage of the nascent transcript by cleavage factors such as GreA or GreB allows the resumption of elongation from the new 3'terminus. GreA releases sequences of 2 to 3 nucleotides. The sequence is that of Transcription elongation factor GreA from Nitratiruptor sp. (strain SB155-2).